A 186-amino-acid polypeptide reads, in one-letter code: Elongation factor P (186 aa).

The protein belongs to the elongation factor P family.

The protein resides in the cytoplasm. The protein operates within protein biosynthesis; polypeptide chain elongation. Functionally, involved in peptide bond synthesis. Stimulates efficient translation and peptide-bond synthesis on native or reconstituted 70S ribosomes in vitro. Probably functions indirectly by altering the affinity of the ribosome for aminoacyl-tRNA, thus increasing their reactivity as acceptors for peptidyl transferase. The sequence is that of Elongation factor P from Streptococcus sanguinis (strain SK36).